A 542-amino-acid polypeptide reads, in one-letter code: Chaperonin GroEL (542 aa).

Residues 29–32 (TMGP), lysine 50, 86–90 (DGTTT), glycine 414, 477–479 (NAA), and aspartate 493 each bind ATP.

Belongs to the chaperonin (HSP60) family. In terms of assembly, forms a cylinder of 14 subunits composed of two heptameric rings stacked back-to-back. Interacts with the co-chaperonin GroES.

Its subcellular location is the cytoplasm. The catalysed reaction is ATP + H2O + a folded polypeptide = ADP + phosphate + an unfolded polypeptide.. In terms of biological role, together with its co-chaperonin GroES, plays an essential role in assisting protein folding. The GroEL-GroES system forms a nano-cage that allows encapsulation of the non-native substrate proteins and provides a physical environment optimized to promote and accelerate protein folding. The sequence is that of Chaperonin GroEL from Sulfurovum sp. (strain NBC37-1).